A 108-amino-acid chain; its full sequence is Trp operon repressor homolog (108 aa).

Residues 59 to 82 (QRQISQLLGVGVATITRGSNELKS) mediate DNA binding.

The protein belongs to the TrpR family. As to quaternary structure, homodimer.

The protein resides in the cytoplasm. Its function is as follows. This protein is an aporepressor. When complexed with L-tryptophan it binds the operator region of the trp operon and prevents the initiation of transcription. This Aliivibrio salmonicida (strain LFI1238) (Vibrio salmonicida (strain LFI1238)) protein is Trp operon repressor homolog.